The chain runs to 377 residues: Succinyl-diaminopimelate desuccinylase (377 aa).

His67 lines the Zn(2+) pocket. Asp69 is an active-site residue. Asp100 provides a ligand contact to Zn(2+). Residue Glu134 is the Proton acceptor of the active site. Positions 135, 163, and 349 each coordinate Zn(2+).

It belongs to the peptidase M20A family. DapE subfamily. In terms of assembly, homodimer. Zn(2+) serves as cofactor. Co(2+) is required as a cofactor.

It catalyses the reaction N-succinyl-(2S,6S)-2,6-diaminopimelate + H2O = (2S,6S)-2,6-diaminopimelate + succinate. The protein operates within amino-acid biosynthesis; L-lysine biosynthesis via DAP pathway; LL-2,6-diaminopimelate from (S)-tetrahydrodipicolinate (succinylase route): step 3/3. In terms of biological role, catalyzes the hydrolysis of N-succinyl-L,L-diaminopimelic acid (SDAP), forming succinate and LL-2,6-diaminopimelate (DAP), an intermediate involved in the bacterial biosynthesis of lysine and meso-diaminopimelic acid, an essential component of bacterial cell walls. This is Succinyl-diaminopimelate desuccinylase from Actinobacillus pleuropneumoniae serotype 3 (strain JL03).